The following is a 353-amino-acid chain: Protein RecA (353 aa).

Position 67–74 (67–74 (GPESSGKT)) interacts with ATP.

This sequence belongs to the RecA family.

The protein localises to the cytoplasm. Can catalyze the hydrolysis of ATP in the presence of single-stranded DNA, the ATP-dependent uptake of single-stranded DNA by duplex DNA, and the ATP-dependent hybridization of homologous single-stranded DNAs. It interacts with LexA causing its activation and leading to its autocatalytic cleavage. This chain is Protein RecA, found in Shewanella loihica (strain ATCC BAA-1088 / PV-4).